The chain runs to 395 residues: Acid ceramidase (395 aa).

A signal peptide spans 1–21; it reads MPGRSRVALVLLAAAVSCAVA. A disulfide bridge connects residues Cys-31 and Cys-340. Cys-143 (nucleophile) is an active-site residue. Residues Asn-195, Asn-259, Asn-286, and Asn-342 are each glycosylated (N-linked (GlcNAc...) asparagine). Cys-388 and Cys-392 are disulfide-bonded.

Belongs to the acid ceramidase family. Heterodimer; disulfide-linked. The heterodimer is composed of the disulfide-linked alpha and beta chains produced by autocatalytic cleavage of the precursor. Post-translationally, N-glycosylated. Proteolytically cleaved into two chains alpha and beta that remain associated via a disulfide bond. Cleavage gives rise to a conformation change that activates the enzyme. The same catalytic Cys residue mediates the autoproteolytic cleavage and subsequent hydrolysis of lipid substrates. The beta chain may undergo an additional C-terminal processing.

It is found in the lysosome. The protein localises to the secreted. It catalyses the reaction an N-acylsphing-4-enine + H2O = sphing-4-enine + a fatty acid. The catalysed reaction is N-dodecanoylsphing-4-enine + H2O = dodecanoate + sphing-4-enine. It carries out the reaction N-tetradecanoylsphing-4-enine + H2O = tetradecanoate + sphing-4-enine. The enzyme catalyses N-hexadecanoylsphing-4-enine + H2O = sphing-4-enine + hexadecanoate. It catalyses the reaction N-octadecanoylsphing-4-enine + H2O = sphing-4-enine + octadecanoate. The catalysed reaction is N-dodecanoyl-(4R)-hydroxysphinganine + H2O = (4R)-hydroxysphinganine + dodecanoate. It carries out the reaction N-(dodecanoyl)-sphinganine + H2O = dodecanoate + sphinganine. The enzyme catalyses N-(acetyl)-sphing-4-enine + H2O = sphing-4-enine + acetate. It catalyses the reaction N-(hexanoyl)sphing-4-enine + H2O = hexanoate + sphing-4-enine. The catalysed reaction is N-octanoylsphing-4-enine + H2O = octanoate + sphing-4-enine. It carries out the reaction N-(9Z-octadecenoyl)-sphing-4-enine + H2O = sphing-4-enine + (9Z)-octadecenoate. The enzyme catalyses N-dodecanoylethanolamine + H2O = dodecanoate + ethanolamine. It functions in the pathway lipid metabolism; sphingolipid metabolism. Functionally, lysosomal ceramidase that hydrolyzes sphingolipid ceramides into sphingosine and free fatty acids at acidic pH. Ceramides, sphingosine, and its phosphorylated form sphingosine-1-phosphate are bioactive lipids that mediate cellular signaling pathways regulating several biological processes including cell proliferation, apoptosis and differentiation. Has a higher catalytic efficiency towards C12-ceramides versus other ceramides. Also catalyzes the reverse reaction allowing the synthesis of ceramides from fatty acids and sphingosine. For the reverse synthetic reaction, the natural sphingosine D-erythro isomer is more efficiently utilized as a substrate compared to D-erythro-dihydrosphingosine and D-erythro-phytosphingosine, while the fatty acids with chain lengths of 12 or 14 carbons are the most efficiently used. Also has an N-acylethanolamine hydrolase activity. By regulating the levels of ceramides, sphingosine and sphingosine-1-phosphate in the epidermis, mediates the calcium-induced differentiation of epidermal keratinocytes. Also indirectly regulates tumor necrosis factor/TNF-induced apoptosis. By regulating the intracellular balance between ceramides and sphingosine, in adrenocortical cells, probably also acts as a regulator of steroidogenesis. This is Acid ceramidase from Pan troglodytes (Chimpanzee).